Reading from the N-terminus, the 137-residue chain is Protein Turandot X (137 aa).

Positions 1–24 (MRVPVFQLSCLLGLIVCLLCSVKA) are cleaved as a signal peptide.

This sequence belongs to the Turandot family.

The protein resides in the secreted. Its function is as follows. A humoral factor that may play a role in stress tolerance. The protein is Protein Turandot X of Drosophila pseudoobscura pseudoobscura (Fruit fly).